We begin with the raw amino-acid sequence, 267 residues long: Cell division protein FtsQ (267 aa).

Topologically, residues 1–32 (MRKKTSSNKKKQTKKTNNISLRRKLGLMYKKA) are cytoplasmic. Residues 33 to 53 (ILGLKIALIIFVCLFVFTKYF) traverse the membrane as a helical segment. Over 54–267 (AGIKTYLTTN…DKNKYYIEKY (214 aa)) the chain is Periplasmic. The POTRA domain occupies 73 to 141 (FKLENVIIEG…NTVYIKLFER (69 aa)).

Belongs to the FtsQ/DivIB family. FtsQ subfamily.

The protein resides in the cell inner membrane. In terms of biological role, essential cell division protein. This chain is Cell division protein FtsQ, found in Rickettsia conorii (strain ATCC VR-613 / Malish 7).